Here is a 286-residue protein sequence, read N- to C-terminus: Ribosomal RNA small subunit methyltransferase H (286 aa).

S-adenosyl-L-methionine-binding positions include 17-19 (AGH), D36, F63, D84, and Q91.

It belongs to the methyltransferase superfamily. RsmH family.

The protein localises to the cytoplasm. The catalysed reaction is cytidine(1402) in 16S rRNA + S-adenosyl-L-methionine = N(4)-methylcytidine(1402) in 16S rRNA + S-adenosyl-L-homocysteine + H(+). Its function is as follows. Specifically methylates the N4 position of cytidine in position 1402 (C1402) of 16S rRNA. The sequence is that of Ribosomal RNA small subunit methyltransferase H from Metamycoplasma arthritidis (strain 158L3-1) (Mycoplasma arthritidis).